The primary structure comprises 704 residues: Protein kinase C-like 1 (704 aa).

Threonine 89 and threonine 139 each carry phosphothreonine; by autocatalysis. 2 Phorbol-ester/DAG-type zinc fingers span residues 165-215 and 237-287; these read GHQF…IMQC and PHRF…SNLC. Position 324 is a phosphothreonine; by autocatalysis (threonine 324). In terms of domain architecture, Protein kinase spans 375–634; sequence FNLLKVLGKG…DGPIRQHCFF (260 aa). Residues 381 to 389 and lysine 404 each bind ATP; that span reads LGKGSFGKV. Catalysis depends on aspartate 499, which acts as the Proton acceptor. The 70-residue stretch at 635–704 folds into the AGC-kinase C-terminal domain; the sequence is RGVDWKRFEN…FSYTNPHFSK (70 aa).

The protein belongs to the protein kinase superfamily. AGC Ser/Thr protein kinase family. PKC subfamily.

The catalysed reaction is L-seryl-[protein] + ATP = O-phospho-L-seryl-[protein] + ADP + H(+). The enzyme catalyses L-threonyl-[protein] + ATP = O-phospho-L-threonyl-[protein] + ADP + H(+). Functionally, diacylglycerol (DAG)-dependent serine/threonine-protein kinase that phosphorylates a range of cellular proteins. Phosphorylates mlk-1, a component of the JNK pathway. Involved in axon regeneration after injury probably by activating the JNK pathway. Plays a role in resistance to fungal infection and in wound healing by promoting expression of antimicrobial peptide nlp-29 in the epidermis downstream of gpa-12 and plc-3 and upstream of tir-1-p38-like pathway. Probably by regulating neuronal transmission in ALA neurons, regulates the decrease in pharyngeal pumping during the quiescent state that precedes each larval molt, downstream of lin-3 and receptor let-23 and phospholipase plc-3. This Caenorhabditis elegans protein is Protein kinase C-like 1 (tpa-1).